Here is a 1783-residue protein sequence, read N- to C-terminus: Doublecortin domain-containing protein 1 (1783 aa).

The disordered stretch occupies residues 93-133 (GLQDCSTHQTASDHSHDEISDLDSYKSNSKNNSCSISASKR). The span at 117-131 (YKSNSKNNSCSISAS) shows a compositional bias: low complexity. The region spanning 168-252 (KLQPRVIKVT…FLNPFKKIKD (85 aa)) is the Doublecortin 1 domain. In terms of domain architecture, Ricin B-type lectin 1 spans 702–800 (WLITKTGMIL…HIHHGAWTTA (99 aa)). Residues 860 to 880 (ASAQRWAIKHEGTSKPGQWKH) are disordered. In terms of domain architecture, Doublecortin 2 spans 925–1015 (PICKTTEPYA…ELWINPDLSI (91 aa)). Positions 1151 to 1266 (SCSPKHSKLH…GAANQKWHYM (116 aa)) constitute a Ricin B-type lectin 2 domain.

Interacts with dynein intermediate chain, tubulin, RAB8A, RAB3IP, NUDC, PAFAH1B1 and DCTN1.

The protein localises to the midbody. Its subcellular location is the midbody ring. It localises to the cytoplasm. The protein resides in the cytoskeleton. It is found in the spindle. Microtubule-binding protein which plays an important role in mediating dynein-dependent transport of RAB8A-positive vesicles to the midbody during cytokinesis. This is Doublecortin domain-containing protein 1 from Homo sapiens (Human).